We begin with the raw amino-acid sequence, 171 residues long: Shikimate kinase (171 aa).

An ATP-binding site is contributed by 14–19 (GAGKST). Residue serine 18 participates in Mg(2+) binding. The substrate site is built by aspartate 36, arginine 60, and glycine 82. Arginine 120 lines the ATP pocket. Arginine 139 is a substrate binding site. Glutamine 156 contacts ATP.

It belongs to the shikimate kinase family. Monomer. Mg(2+) serves as cofactor.

It localises to the cytoplasm. The enzyme catalyses shikimate + ATP = 3-phosphoshikimate + ADP + H(+). Its pathway is metabolic intermediate biosynthesis; chorismate biosynthesis; chorismate from D-erythrose 4-phosphate and phosphoenolpyruvate: step 5/7. Catalyzes the specific phosphorylation of the 3-hydroxyl group of shikimic acid using ATP as a cosubstrate. The protein is Shikimate kinase of Shewanella woodyi (strain ATCC 51908 / MS32).